The following is a 132-amino-acid chain: MKVVCIIVLFVIVAVNESATSEANTSNAAKDTKKKNVTLQFPSYIQNPKQLALELLKICKNNKSSHNSLTSRSSYNYYAINDKYVDFKNCTFLCKHDKDINVTLNMPPNTPCGPNGQTCADKSQCVGHIPGC.

The signal sequence occupies residues Met-1–Ser-18. Asn-24, Asn-36, Asn-62, Asn-89, and Asn-101 each carry an N-linked (GlcNAc...) asparagine glycan. The interval Gly-113–Cys-132 is CD4-binding.

Belongs to the salp15 family. In terms of assembly, interacts with host CD4. Interacts with host DC-SIGN (CD209). (Microbial infection) Interacts with Borrelia outer surface protein C (OspC). As to expression, expressed in salivary glands from feeding female ticks. Highly expressed 1 day after start of feeding, and weakly expressed at the initiation of feeding and 4 days after start of feeding.

The protein resides in the secreted. Salivary tick protein that downregulates host immune system by binding to both dendritic cells, and CD4(+) T cells. Specifically binds to the CD4 coreceptor on T cells. This interaction prevents the activation of the Src kinase, Lck, and its downstream substrate Zap-70, and results in deficient activation of PLCgamma1, the repression of calcium fluxes triggered by T-cell antigen receptor (TCR) ligation, and a subsequent reduction in interleukin-2 production. This salivary protein also binds to DC-SIGN (CD209) on dendritic cells (DC) and activates the Raf-1 kinase/MEK signaling pathway that results in down-regulating expression of pro-inflammatory cytokines. Furthermore, it inhibits T cell proliferation induced by DCs. It also inhibits in vitro keratinocyte inflammation induced by Borrelia burgdorferi or by the major outer surface protein (OspC) of Borrelia. In addition, it downregulates chemokines and monocyte chemoattractant protein 1, as well as several antimicrobial peptides such as defensins, cathelicidin, psoriasin, and RNase 7. Apart from its immunomodulatory activities, it is also associated with protection of Borrelia spirochetes from antibody-mediated killing through its binding to OspC. In vivo, tests on different immune disease animal models show promising therapeutic results, e.g., in inhibiting HIV infection, experimental autoimmune encephalomyelitis, transplantation rejection, and asthma. In terms of biological role, (Microbial infection) Protects Borrelia garinii from anti-Borrelia antibody-mediated cytotoxicity in vitro. May facilitate B.garinii transmission in mouse model. Functionally, (Microbial infection) Protects Borrelia burgdorferi from anti-Borrelia antibody-mediated cytotoxicity in vitro. Its function is as follows. (Microbial infection) Protects Borrelia afzelii from anti-Borrelia antibody-mediated cytotoxicity in vitro. This chain is Salivary protein 15 Iper-2, found in Ixodes persulcatus (Taiga tick).